An 837-amino-acid polypeptide reads, in one-letter code: Histone acetyltransferase KAT2A (837 aa).

Positions 1–99 are disordered; it reads MAEPSQAPTP…RKAQVRGLPR (99 aa). A2 carries the post-translational modification N-acetylalanine. The span at 7–51 shows a compositional bias: pro residues; it reads APTPAPAAQPRPLQSPAPAPTPTPAPSPASAPIPTPTPAPAPAPA. A compositionally biased stretch (gly residues) spans 58–74; that stretch reads TGTGGPGVGSGGAGSGG. Residues 75–87 are compositionally biased toward low complexity; that stretch reads DPARPGLSQQQRA. Residues 88 to 99 are compositionally biased toward basic residues; that stretch reads SQRKAQVRGLPR. S307 bears the Phosphoserine mark. The disordered stretch occupies residues 407–434; that stretch reads FSPSMGGGSNSSLSLDSAGAEPMPGEKR. The span at 416-425 shows a compositional bias: low complexity; it reads NSSLSLDSAG. The N-acetyltransferase domain maps to 503 to 656; the sequence is VIGNSLTPKA…GATLMECELN (154 aa). N6-acetyllysine is present on K549. E575 acts as the Proton donor/acceptor in catalysis. Acetyl-CoA contacts are provided by residues 579–581, 586–592, and Y617; these read CAV and QVKGYGT. Succinyl-CoA is bound by residues 579–581, 586–592, and Y617; these read CAV and QVKGYGT. The tract at residues 639–648 is loop 3; the sequence is LGYIKDYEGA. K728 is covalently cross-linked (Glycyl lysine isopeptide (Lys-Gly) (interchain with G-Cter in SUMO2)). Positions 728–832 constitute a Bromo domain; the sequence is KDPDQLYTTL…KFFYFKLKEG (105 aa). T735 bears the Phosphothreonine mark. Glycyl lysine isopeptide (Lys-Gly) (interchain with G-Cter in SUMO2) cross-links involve residues K759 and K791.

It belongs to the acetyltransferase family. GCN5 subfamily. In terms of assembly, homooligomer; may form a tetramer of homodimers. Interacts with EP300, CREBBP and ADA2. Component of the TFTC-HAT complex, at least composed of TAF5L, TAF6L, TAF3, TADA3L, SUPT3H/SPT3, TAF2/TAFII150, TAF4/TAFII135, TAF5/TAFII100, KAT2A/GCN5L2, TAF10 and TRRAP. Component of the STAGA transcription coactivator-HAT complex, at least composed of SUPT3H, KAT2A, SUPT7L, TAF5L, TAF6L, TADA3L, TAD1L, TAF10, TAF12, TRRAP and TAF9. The STAGA core complex is associated with a subcomplex required for histone deubiquitination composed of ATXN7L3, ENY2 and USP22. Component of the ADA2A-containing complex (ATAC), composed of KAT14, KAT2A, TADA2L, TADA3L, ZZ3, MBIP, WDR5, YEATS2, CCDC101 and DR1. In the complex, it probably interacts directly with KAT14, MBIP and WDR5. Interacts with PML. Interacts with CEBPB. Interacts with TACC1, TACC2 and TACC3. Interacts with RELA. Interacts with NFATC2. Interacts with TBX5. Interacts with PLK4. Associates with the 2-oxoglutarate dehydrogenase complex. Interacts with XPC; leading to KAT2A recruitment to promoters and subsequent acetylation of histones. Interacts with ERCC3/XPB; leading to KAT2A recruitment to promoters and subsequent acetylation of histones. Interacts with ISL1. Interactions of ISL1 with MLIP1 or KAT2A may be mutually exclusive. As to quaternary structure, (Microbial infection) Interacts with and acetylates HIV-1 Tat. Post-translationally, acetylated at Lys-549, inhibiting the protein acetyltransferase activity. Deacetylation at Lys-549 by SIRT6 promotes phosphorylation at Ser-307 and Thr-735 and subsequent activation of the protein acetyltransferase activity, leading to acetylation and inactivation of PPARGC1A. As to expression, expressed in all tissues tested.

It localises to the nucleus. It is found in the chromosome. Its subcellular location is the cytoplasm. The protein localises to the cytoskeleton. The protein resides in the microtubule organizing center. It localises to the centrosome. The catalysed reaction is L-lysyl-[histone] + acetyl-CoA = N(6)-acetyl-L-lysyl-[histone] + CoA + H(+). It carries out the reaction L-lysyl-[protein] + acetyl-CoA = N(6)-acetyl-L-lysyl-[protein] + CoA + H(+). The enzyme catalyses succinyl-CoA + L-lysyl-[protein] = N(6)-succinyl-L-lysyl-[protein] + CoA + H(+). It catalyses the reaction glutaryl-CoA + L-lysyl-[protein] = N(6)-glutaryl-L-lysyl-[protein] + CoA + H(+). Protein lysine acyltransferase that can act as a acetyltransferase, glutaryltransferase, succinyltransferase or malonyltransferase, depending on the context. Acts as a histone lysine succinyltransferase: catalyzes succinylation of histone H3 on 'Lys-79' (H3K79succ), with a maximum frequency around the transcription start sites of genes. Succinylation of histones gives a specific tag for epigenetic transcription activation. Association with the 2-oxoglutarate dehydrogenase complex, which provides succinyl-CoA, is required for histone succinylation. In different complexes, functions either as an acetyltransferase (HAT) or as a succinyltransferase: in the SAGA and ATAC complexes, acts as a histone acetyltransferase. Has significant histone acetyltransferase activity with core histones, but not with nucleosome core particles. Has a a strong preference for acetylation of H3 at 'Lys-9' (H3K9ac). Acetylation of histones gives a specific tag for epigenetic transcription activation. Recruited by the XPC complex at promoters, where it specifically mediates acetylation of histone variant H2A.Z.1/H2A.Z, thereby promoting expression of target genes. Involved in long-term memory consolidation and synaptic plasticity: acts by promoting expression of a hippocampal gene expression network linked to neuroactive receptor signaling. Acts as a positive regulator of T-cell activation: upon TCR stimulation, recruited to the IL2 promoter following interaction with NFATC2 and catalyzes acetylation of histone H3 at 'Lys-9' (H3K9ac), leading to promote IL2 expression. Required for growth and differentiation of craniofacial cartilage and bone by regulating acetylation of histone H3 at 'Lys-9' (H3K9ac). Regulates embryonic stem cell (ESC) pluripotency and differentiation. Also acetylates non-histone proteins, such as CEBPB, MRE11, PPARGC1A, PLK4 and TBX5. Involved in heart and limb development by mediating acetylation of TBX5, acetylation regulating nucleocytoplasmic shuttling of TBX5. Acts as a negative regulator of centrosome amplification by mediating acetylation of PLK4. Acts as a negative regulator of gluconeogenesis by mediating acetylation and subsequent inactivation of PPARGC1A. Also acts as a histone glutaryltransferase: catalyzes glutarylation of histone H4 on 'Lys-91' (H4K91glu), a mark that destabilizes nucleosomes by promoting dissociation of the H2A-H2B dimers from nucleosomes. Its function is as follows. (Microbial infection) In case of HIV-1 infection, it is recruited by the viral protein Tat. Regulates Tat's transactivating activity and may help inducing chromatin remodeling of proviral genes. In Homo sapiens (Human), this protein is Histone acetyltransferase KAT2A.